Consider the following 425-residue polypeptide: Serine--tRNA ligase (425 aa).

230–232 (TAE) contacts L-serine. Position 261–263 (261–263 (RSE)) interacts with ATP. L-serine is bound at residue Glu-284. 348-351 (EISS) lines the ATP pocket. Ser-383 serves as a coordination point for L-serine.

Belongs to the class-II aminoacyl-tRNA synthetase family. Type-1 seryl-tRNA synthetase subfamily. In terms of assembly, homodimer. The tRNA molecule binds across the dimer.

Its subcellular location is the cytoplasm. It catalyses the reaction tRNA(Ser) + L-serine + ATP = L-seryl-tRNA(Ser) + AMP + diphosphate + H(+). The enzyme catalyses tRNA(Sec) + L-serine + ATP = L-seryl-tRNA(Sec) + AMP + diphosphate + H(+). Its pathway is aminoacyl-tRNA biosynthesis; selenocysteinyl-tRNA(Sec) biosynthesis; L-seryl-tRNA(Sec) from L-serine and tRNA(Sec): step 1/1. Functionally, catalyzes the attachment of serine to tRNA(Ser). Is also able to aminoacylate tRNA(Sec) with serine, to form the misacylated tRNA L-seryl-tRNA(Sec), which will be further converted into selenocysteinyl-tRNA(Sec). The polypeptide is Serine--tRNA ligase (Ligilactobacillus salivarius (strain UCC118) (Lactobacillus salivarius)).